The following is a 470-amino-acid chain: Uronate isomerase (470 aa).

The protein belongs to the metallo-dependent hydrolases superfamily. Uronate isomerase family.

It catalyses the reaction D-glucuronate = D-fructuronate. The enzyme catalyses aldehydo-D-galacturonate = keto-D-tagaturonate. The protein operates within carbohydrate metabolism; pentose and glucuronate interconversion. This is Uronate isomerase from Salmonella newport (strain SL254).